The sequence spans 282 residues: 4-diphosphocytidyl-2-C-methyl-D-erythritol kinase (282 aa).

The active site involves lysine 11. 93–103 (LVSAGLAGGSA) provides a ligand contact to ATP. The active site involves aspartate 133.

It belongs to the GHMP kinase family. IspE subfamily.

The catalysed reaction is 4-CDP-2-C-methyl-D-erythritol + ATP = 4-CDP-2-C-methyl-D-erythritol 2-phosphate + ADP + H(+). The protein operates within isoprenoid biosynthesis; isopentenyl diphosphate biosynthesis via DXP pathway; isopentenyl diphosphate from 1-deoxy-D-xylulose 5-phosphate: step 3/6. Its function is as follows. Catalyzes the phosphorylation of the position 2 hydroxy group of 4-diphosphocytidyl-2C-methyl-D-erythritol. The chain is 4-diphosphocytidyl-2-C-methyl-D-erythritol kinase from Ehrlichia canis (strain Jake).